Consider the following 174-residue polypeptide: Transmembrane protein 208 (174 aa).

3 helical membrane passes run 30 to 50 (NMAIGCAAPALLLSFLVFEVT), 54 to 74 (VFMHILSLLILGSSYQFMAFM), and 111 to 131 (GTLLLALISNYFWLVLLLAPI). Residues 151–174 (AQDDNPQVDEKKQKKMDRRMRRMR) are disordered. Residues 163 to 174 (QKKMDRRMRRMR) are compositionally biased toward basic residues.

Belongs to the TMEM208 family. In terms of assembly, interacts with fz. Expressed in the brain.

Its subcellular location is the endoplasmic reticulum membrane. Its function is as follows. May play an important role during development and helps to maintain proper levels of Fz. The protein is Transmembrane protein 208 of Drosophila melanogaster (Fruit fly).